Reading from the N-terminus, the 137-residue chain is MNIALVAHDKKKDDLIVLIKTYAHILKKHQLFATGTTGKRIAEATGLPVHCFRSGPLGGDQEIGAAVARGEMDMIIFFRDPLTAQPHEPDVSALMRLCDVYSIPLSTNMGGSEILIRSIEQGDFESLKLSHNDEPPA.

Residues 1 to 137 (MNIALVAHDK…KLSHNDEPPA (137 aa)) enclose the MGS-like domain. Residues histidine 8, lysine 12, 34 to 37 (TGTT), and 54 to 55 (SG) each bind substrate. The Proton donor/acceptor role is filled by aspartate 60. Residue histidine 87 participates in substrate binding.

The protein belongs to the methylglyoxal synthase family.

The enzyme catalyses dihydroxyacetone phosphate = methylglyoxal + phosphate. In terms of biological role, catalyzes the formation of methylglyoxal from dihydroxyacetone phosphate. The sequence is that of Methylglyoxal synthase from Exiguobacterium sp. (strain ATCC BAA-1283 / AT1b).